The primary structure comprises 138 residues: Superoxide dismutase [Mn] (138 aa).

Mn(2+) is bound by residues Ser1, His49, Asp133, and His137.

This sequence belongs to the iron/manganese superoxide dismutase family. It depends on Mn(2+) as a cofactor.

It catalyses the reaction 2 superoxide + 2 H(+) = H2O2 + O2. Functionally, destroys superoxide anion radicals which are normally produced within the cells and which are toxic to biological systems. This chain is Superoxide dismutase [Mn] (sodA), found in Mycobacterium marinum.